A 204-amino-acid chain; its full sequence is Synaptosomal-associated protein 25-A (204 aa).

A compositionally biased stretch (basic and acidic residues) spans Met-1–Leu-11. Residues Met-1–Ser-25 are disordered. T-SNARE coiled-coil homology domains follow at residues Asp-19–Leu-81 and Asp-138–Met-200.

Belongs to the SNAP-25 family. Expressed in several regions throughout the adult brain, including the mesencephalon.

Its subcellular location is the synapse. The protein resides in the synaptosome. It localises to the cell membrane. May play an important role in the synaptic function of specific neuronal systems. Associates with proteins involved in vesicle docking and membrane fusion. The polypeptide is Synaptosomal-associated protein 25-A (Danio rerio (Zebrafish)).